The chain runs to 182 residues: Large ribosomal subunit protein uL16 (182 aa).

Belongs to the universal ribosomal protein uL16 family.

The polypeptide is Large ribosomal subunit protein uL16 (Pyrobaculum arsenaticum (strain DSM 13514 / JCM 11321 / PZ6)).